The chain runs to 347 residues: D-alanine--D-alanine ligase (347 aa).

An ATP-grasp domain is found at Lys134 to Lys332. Residue Leu161 to Tyr216 coordinates ATP. Mg(2+) contacts are provided by Asp288, Glu300, and Asn302.

The protein belongs to the D-alanine--D-alanine ligase family. Mg(2+) is required as a cofactor. It depends on Mn(2+) as a cofactor.

The protein localises to the cytoplasm. The enzyme catalyses 2 D-alanine + ATP = D-alanyl-D-alanine + ADP + phosphate + H(+). Its pathway is cell wall biogenesis; peptidoglycan biosynthesis. Its function is as follows. Cell wall formation. The protein is D-alanine--D-alanine ligase of Helicobacter pylori (strain J99 / ATCC 700824) (Campylobacter pylori J99).